A 315-amino-acid chain; its full sequence is Ribonuclease Z (315 aa).

Zn(2+)-binding residues include His-62, His-64, Asp-66, His-67, His-144, Asp-215, and His-273. Residue Asp-66 is the Proton acceptor of the active site.

Belongs to the RNase Z family. As to quaternary structure, homodimer. Zn(2+) is required as a cofactor.

It carries out the reaction Endonucleolytic cleavage of RNA, removing extra 3' nucleotides from tRNA precursor, generating 3' termini of tRNAs. A 3'-hydroxy group is left at the tRNA terminus and a 5'-phosphoryl group is left at the trailer molecule.. Zinc phosphodiesterase, which displays some tRNA 3'-processing endonuclease activity. Probably involved in tRNA maturation, by removing a 3'-trailer from precursor tRNA. The chain is Ribonuclease Z from Synechococcus sp. (strain CC9311).